A 313-amino-acid polypeptide reads, in one-letter code: Ribonuclease Z (313 aa).

Positions 63, 65, 67, 68, 142, 212, and 270 each coordinate Zn(2+). Asp67 functions as the Proton acceptor in the catalytic mechanism.

Belongs to the RNase Z family. Homodimer. It depends on Zn(2+) as a cofactor.

It catalyses the reaction Endonucleolytic cleavage of RNA, removing extra 3' nucleotides from tRNA precursor, generating 3' termini of tRNAs. A 3'-hydroxy group is left at the tRNA terminus and a 5'-phosphoryl group is left at the trailer molecule.. Zinc phosphodiesterase, which displays some tRNA 3'-processing endonuclease activity. Probably involved in tRNA maturation, by removing a 3'-trailer from precursor tRNA. The polypeptide is Ribonuclease Z (Enterococcus faecalis (strain ATCC 700802 / V583)).